The following is a 121-amino-acid chain: Small ribosomal subunit protein uS13 (121 aa).

The disordered stretch occupies residues 91 to 121 (HRRGLPVRGQKTKNNARTRKGPVKTVANKKK).

Belongs to the universal ribosomal protein uS13 family. In terms of assembly, part of the 30S ribosomal subunit. Forms a loose heterodimer with protein S19. Forms two bridges to the 50S subunit in the 70S ribosome.

Its function is as follows. Located at the top of the head of the 30S subunit, it contacts several helices of the 16S rRNA. In the 70S ribosome it contacts the 23S rRNA (bridge B1a) and protein L5 of the 50S subunit (bridge B1b), connecting the 2 subunits; these bridges are implicated in subunit movement. Contacts the tRNAs in the A and P-sites. This Staphylococcus epidermidis (strain ATCC 35984 / DSM 28319 / BCRC 17069 / CCUG 31568 / BM 3577 / RP62A) protein is Small ribosomal subunit protein uS13.